The primary structure comprises 590 residues: DNA mismatch repair protein MutL (590 aa).

The segment covering 335 to 351 (PLSSASPKLPESTTATA) has biased composition (polar residues). Residues 335 to 354 (PLSSASPKLPESTTATAQPH) are disordered.

The protein belongs to the DNA mismatch repair MutL/HexB family.

This protein is involved in the repair of mismatches in DNA. It is required for dam-dependent methyl-directed DNA mismatch repair. May act as a 'molecular matchmaker', a protein that promotes the formation of a stable complex between two or more DNA-binding proteins in an ATP-dependent manner without itself being part of a final effector complex. This chain is DNA mismatch repair protein MutL, found in Dichelobacter nodosus (strain VCS1703A).